We begin with the raw amino-acid sequence, 160 residues long: Transcription elongation factor GreA (160 aa).

Residues 2-84 adopt a coiled-coil conformation; the sequence is KNTVNDKILL…SKAKIIKADL (83 aa).

It belongs to the GreA/GreB family.

In terms of biological role, necessary for efficient RNA polymerase transcription elongation past template-encoded arresting sites. The arresting sites in DNA have the property of trapping a certain fraction of elongating RNA polymerases that pass through, resulting in locked ternary complexes. Cleavage of the nascent transcript by cleavage factors such as GreA or GreB allows the resumption of elongation from the new 3'terminus. GreA releases sequences of 2 to 3 nucleotides. The protein is Transcription elongation factor GreA of Mesomycoplasma hyopneumoniae (strain 232) (Mycoplasma hyopneumoniae).